Consider the following 210-residue polypeptide: Urease accessory protein UreF (210 aa).

This sequence belongs to the UreF family. In terms of assembly, ureD, UreF and UreG form a complex that acts as a GTP-hydrolysis-dependent molecular chaperone, activating the urease apoprotein by helping to assemble the nickel containing metallocenter of UreC. The UreE protein probably delivers the nickel.

Its subcellular location is the cytoplasm. In terms of biological role, required for maturation of urease via the functional incorporation of the urease nickel metallocenter. The polypeptide is Urease accessory protein UreF (Cereibacter sphaeroides (strain KD131 / KCTC 12085) (Rhodobacter sphaeroides)).